A 466-amino-acid polypeptide reads, in one-letter code: MAKTLYEKLFDAHVVFEAPNETPLLYIDRHLVHEVTSPQAFDGLRAHHRPVRQPGKTFATMDHNVSTQTKDINASGEMARIQMQELIKNCNEFGVELYDLNHPYQGIVHVMGPEQGVTLPGMTIVCGDSHTATHGAFGALAFGIGTSEVEHVLATQTLKQGRAKTMKIEVTGNAAPGITAKDIVLAIIGKTGSAGGTGHVVEFCGDAIRALSMEGRMTLCNMAIEMGAKAGLVAPDETTFNYVKGRLHAPKGRDFDEAVEYWKTLKTDDGATFDTVVTLRAEEIAPQVTWGTNPGQVISVTDIIPDPASFSDPVERASAEKALAYMGLQPGVPLTDVAIDKVFIGSCTNSRIEDLRAAAEVAKGRKVAPGVQALVVPGSGPVKAQAEAEGLDKIFIEAGFEWRLPGCSMCLAMNNDRLNPGERCASTSNRNFEGRQGRGGRTHLVSPAMAAAAAVTGHFADIRSIK.

Residues cysteine 347, cysteine 407, and cysteine 410 each contribute to the [4Fe-4S] cluster site.

This sequence belongs to the aconitase/IPM isomerase family. LeuC type 1 subfamily. Heterodimer of LeuC and LeuD. The cofactor is [4Fe-4S] cluster.

It carries out the reaction (2R,3S)-3-isopropylmalate = (2S)-2-isopropylmalate. Its pathway is amino-acid biosynthesis; L-leucine biosynthesis; L-leucine from 3-methyl-2-oxobutanoate: step 2/4. Its function is as follows. Catalyzes the isomerization between 2-isopropylmalate and 3-isopropylmalate, via the formation of 2-isopropylmaleate. This is 3-isopropylmalate dehydratase large subunit 1 from Salmonella choleraesuis (strain SC-B67).